The chain runs to 305 residues: Ribonuclease BN (305 aa).

Zn(2+) is bound by residues His64, His66, Asp68, His69, His141, Asp212, and His270. Residue Asp68 is the Proton acceptor of the active site.

This sequence belongs to the RNase Z family. RNase BN subfamily. Homodimer. The cofactor is Zn(2+).

Zinc phosphodiesterase, which has both exoribonuclease and endoribonuclease activities. The polypeptide is Ribonuclease BN (Salmonella paratyphi C (strain RKS4594)).